Consider the following 474-residue polypeptide: CUGBP Elav-like family member 4 (474 aa).

Positions 1 to 287 are sufficient for RNA-binding and MSE-dependent splicing activity; it reads MYIKMATLAN…AAFAAAQMQQ (287 aa). A compositionally biased stretch (polar residues) spans 18 to 28; it reads LSTNGLGSSPG. Residues 18–41 form a disordered region; the sequence is LSTNGLGSSPGSAGHMNGLSHSPG. RRM domains follow at residues 54 to 135 and 141 to 221; these read IKLF…PADS and RKLF…FADT. The necessary for TNNT2 exon 5 inclusion stretch occupies residues 228-247; that stretch reads RRMQQMAGQMGMFNPMAIPF. One can recognise an RRM 3 domain in the interval 392–467; the sequence is PQPPPMIPQQ…KRLKVQLKRP (76 aa).

This sequence belongs to the CELF/BRUNOL family.

It localises to the nucleus. The protein resides in the cytoplasm. In terms of biological role, RNA-binding protein implicated in the regulation of pre-mRNA alternative splicing. Mediates exon inclusion and/or exclusion in pre-mRNA that are subject to tissue-specific and developmentally regulated alternative splicing. Specifically activates exon 5 inclusion of cardiac isoforms of TNNT2 during heart remodeling at the juvenile to adult transition. Promotes exclusion of both the smooth muscle (SM) and non-muscle (NM) exons in actinin pre-mRNAs. Activates the splicing of MAPT/Tau exon 10. Binds to muscle-specific splicing enhancer (MSE) intronic sites flanking the alternative exon 5 of TNNT2 pre-mRNA. This Macaca fascicularis (Crab-eating macaque) protein is CUGBP Elav-like family member 4 (CELF4).